A 251-amino-acid polypeptide reads, in one-letter code: Triosephosphate isomerase (251 aa).

Residue 9–11 (NWK) participates in substrate binding. The active-site Electrophile is His-96. The Proton acceptor role is filled by Glu-168. Substrate is bound by residues Gly-174, Ser-214, and 235–236 (GG).

It belongs to the triosephosphate isomerase family. As to quaternary structure, homodimer.

The protein resides in the cytoplasm. It carries out the reaction D-glyceraldehyde 3-phosphate = dihydroxyacetone phosphate. It functions in the pathway carbohydrate biosynthesis; gluconeogenesis. The protein operates within carbohydrate degradation; glycolysis; D-glyceraldehyde 3-phosphate from glycerone phosphate: step 1/1. In terms of biological role, involved in the gluconeogenesis. Catalyzes stereospecifically the conversion of dihydroxyacetone phosphate (DHAP) to D-glyceraldehyde-3-phosphate (G3P). The protein is Triosephosphate isomerase of Porphyromonas gingivalis (strain ATCC 33277 / DSM 20709 / CIP 103683 / JCM 12257 / NCTC 11834 / 2561).